The following is a 932-amino-acid chain: PMS1 protein homolog 1 (932 aa).

The interval 465-493 (TQSENGNKDHIDESGENEEEAGLENSSEI) is disordered. The HMG box DNA-binding region spans 571-639 (IKKPMSASAL…RYNSQMKRAI (69 aa)).

The protein belongs to the DNA mismatch repair MutL/HexB family. Component of the DNA mismatch repair (MMR) complex composed at least of MSH2, MSH3, MSH6, PMS1 and MLH1. The MutL-beta complex is a heterodimer of PMS1 and MLH1. Interacts with MCM9.

The protein localises to the nucleus. Probably involved in the repair of mismatches in DNA. This chain is PMS1 protein homolog 1 (PMS1), found in Homo sapiens (Human).